The sequence spans 267 residues: Undecaprenyl-diphosphatase (267 aa).

The next 7 helical transmembrane spans lie at 39–59, 87–107, 112–132, 145–165, 183–203, 216–236, and 244–264; these read PGLA…IWYF, VLYL…LNDL, FRSP…LWAV, VTLR…VPGV, PSVA…AVIV, LPLL…ISVL, and SFGV…ATLA.

Belongs to the UppP family.

The protein resides in the cell inner membrane. The catalysed reaction is di-trans,octa-cis-undecaprenyl diphosphate + H2O = di-trans,octa-cis-undecaprenyl phosphate + phosphate + H(+). Catalyzes the dephosphorylation of undecaprenyl diphosphate (UPP). Confers resistance to bacitracin. This is Undecaprenyl-diphosphatase from Gemmatimonas aurantiaca (strain DSM 14586 / JCM 11422 / NBRC 100505 / T-27).